Here is a 194-residue protein sequence, read N- to C-terminus: dCTP deaminase (194 aa).

Residues 110–115 (RSSLAR), D128, 136–138 (VLE), Y171, K178, and Q182 contribute to the dCTP site. The active-site Proton donor/acceptor is the E138.

Belongs to the dCTP deaminase family. Homotrimer.

The enzyme catalyses dCTP + H2O + H(+) = dUTP + NH4(+). The protein operates within pyrimidine metabolism; dUMP biosynthesis; dUMP from dCTP (dUTP route): step 1/2. Its function is as follows. Catalyzes the deamination of dCTP to dUTP. This chain is dCTP deaminase, found in Glaesserella parasuis serovar 5 (strain SH0165) (Haemophilus parasuis).